Here is a 100-residue protein sequence, read N- to C-terminus: Small ribosomal subunit protein uS14c (100 aa).

Belongs to the universal ribosomal protein uS14 family. As to quaternary structure, part of the 30S ribosomal subunit.

The protein localises to the plastid. Its subcellular location is the chloroplast. Binds 16S rRNA, required for the assembly of 30S particles. In Pyropia yezoensis (Susabi-nori), this protein is Small ribosomal subunit protein uS14c.